A 112-amino-acid chain; its full sequence is Chaperone NapD (112 aa).

It belongs to the NapD family. In terms of assembly, interacts with the cytoplasmic NapA precursor.

The protein resides in the cytoplasm. Its function is as follows. Chaperone for NapA, the catalytic subunit of the periplasmic nitrate reductase. It binds directly and specifically to the twin-arginine signal peptide of NapA, preventing premature interaction with the Tat translocase and premature export. This is Chaperone NapD from Paracoccus pantotrophus (Thiosphaera pantotropha).